A 535-amino-acid chain; its full sequence is CTP synthase (535 aa).

The amidoligase domain stretch occupies residues 1 to 267 (MTKYIFVTGG…DQIVCDHLKL (267 aa)). CTP is bound at residue Ser-13. Ser-13 contributes to the UTP binding site. 14–19 (SLGKGI) is an ATP binding site. Tyr-54 lines the L-glutamine pocket. Asp-71 contacts ATP. Positions 71 and 141 each coordinate Mg(2+). CTP contacts are provided by residues 148–150 (DIE), 188–193 (KTKPTQ), and Lys-224. UTP-binding positions include 188–193 (KTKPTQ) and Lys-224. 240-242 (RDA) serves as a coordination point for ATP. The Glutamine amidotransferase type-1 domain occupies 292–534 (KIALVGKYVE…VRASITNKES (243 aa)). An L-glutamine-binding site is contributed by Gly-354. The active-site Nucleophile; for glutamine hydrolysis is the Cys-381. L-glutamine contacts are provided by residues 382 to 385 (LGMQ), Glu-405, and Arg-462. Active-site residues include His-507 and Glu-509.

It belongs to the CTP synthase family. As to quaternary structure, homotetramer.

It carries out the reaction UTP + L-glutamine + ATP + H2O = CTP + L-glutamate + ADP + phosphate + 2 H(+). The enzyme catalyses L-glutamine + H2O = L-glutamate + NH4(+). It catalyses the reaction UTP + NH4(+) + ATP = CTP + ADP + phosphate + 2 H(+). Its pathway is pyrimidine metabolism; CTP biosynthesis via de novo pathway; CTP from UDP: step 2/2. Allosterically activated by GTP, when glutamine is the substrate; GTP has no effect on the reaction when ammonia is the substrate. The allosteric effector GTP functions by stabilizing the protein conformation that binds the tetrahedral intermediate(s) formed during glutamine hydrolysis. Inhibited by the product CTP, via allosteric rather than competitive inhibition. Its function is as follows. Catalyzes the ATP-dependent amination of UTP to CTP with either L-glutamine or ammonia as the source of nitrogen. Regulates intracellular CTP levels through interactions with the four ribonucleotide triphosphates. This chain is CTP synthase, found in Bacillus cereus (strain G9842).